The sequence spans 428 residues: MEPLKVEKFATAKRGNGLRAVTPLRPGELLFRSDPLAYTVCKGSRGVVCDRCLLGKEKLMRCSQCRVAKYCSAKCQKKAWPDHKRECKCLKSCKPRYPPDSVRLLGRVVFKLMDGAPSESEKLYSFYDLESNINKLTEDKKEGLRQLVMTFQHFMREEIQDASQLPPAFDLFEAFAKVICNSFTICNAEMQEVGVGLYPSISLLNHSCDPNCSIVFNGPHLLLRAVRDIEVGEELTICYLDMLMTSEERRKQLRDQYCFECDCFRCQTQDKDADMLTGDEQVWKEVQESLKKIEELKAHWKWEQVLAMCQAIISSNSERLPDINIYQLKVLDCAMDACINLGLLEEALFYGTRTMEPYRIFFPGSHPVRGVQVMKVGKLQLHQGMFPQAMKNLRLAFDIMRVTHGREHSLIEDLILLLEECDANIRAS.

M1 is subject to N-acetylmethionine. An SET domain is found at 4–240 (LKVEKFATAK…VGEELTICYL (237 aa)). S-adenosyl-L-methionine is bound at residue 14 to 16 (RGN). A Phosphothreonine modification is found at T22. Residues C49, C52, C62, C65, C71, C75, H83, and C87 each coordinate Zn(2+). An MYND-type zinc finger spans residues 49–87 (CDRCLLGKEKLMRCSQCRVAKYCSAKCQKKAWPDHKREC). S-adenosyl-L-methionine is bound by residues Y124, N132, N181, 205-206 (NH), Y239, and F259. The segment at 272–428 (DADMLTGDEQ…EECDANIRAS (157 aa)) is C-terminal domain; essential for histone methyltransferase activity, nuclear localization and mediates interaction with HSP90AA1.

Belongs to the class V-like SAM-binding methyltransferase superfamily. Histone-lysine methyltransferase family. As to quaternary structure, interacts with HSPCA. Interacts with HELZ. Interacts with POLR2A; the interaction may be indirect and may be mediated by HELZ. Interacts with HSP90AA1; this interaction enhances SMYD3 histone-lysine N-methyltransferase. As to expression, expressed in skeletal muscles and testis. Overexpressed in a majority of colorectal and hepatocellular carcinomas.

It is found in the cytoplasm. The protein resides in the nucleus. It carries out the reaction L-lysyl(4)-[histone H3] + 3 S-adenosyl-L-methionine = N(6),N(6),N(6)-trimethyl-L-lysyl(4)-[histone H3] + 3 S-adenosyl-L-homocysteine + 3 H(+). Its activity is regulated as follows. Histone methyltransferase activity strongly stimulated by HSPCA. Histone methyltransferase. Specifically methylates 'Lys-4' of histone H3, inducing di- and tri-methylation, but not monomethylation. Also methylates 'Lys-5' of histone H4. Plays an important role in transcriptional activation as a member of an RNA polymerase complex. Binds DNA containing 5'-CCCTCC-3' or 5'-GAGGGG-3' sequences. In Homo sapiens (Human), this protein is Histone-lysine N-methyltransferase SMYD3 (SMYD3).